A 622-amino-acid chain; its full sequence is Prothrombin (622 aa).

The first 24 residues, Met-1–Ser-24, serve as a signal peptide directing secretion. Residues Gln-25 to Arg-43 constitute a propeptide that is removed on maturation. The 46-residue stretch at Ala-44–Ala-89 folds into the Gla domain. 4-carboxyglutamate is present on residues Glu-49, Glu-50, Glu-57, Glu-59, Glu-62, Glu-63, Glu-68, Glu-69, Glu-72, and Glu-75. An intrachain disulfide couples Cys-60 to Cys-65. 11 disulfide bridges follow: Cys-90/Cys-103, Cys-108/Cys-186, Cys-129/Cys-169, Cys-157/Cys-181, Cys-213/Cys-291, Cys-234/Cys-274, Cys-262/Cys-286, Cys-336/Cys-482, Cys-391/Cys-407, Cys-536/Cys-550, and Cys-564/Cys-594. Kringle domains are found at residues Cys-108–Cys-186 and Cys-213–Cys-291. Residues Asn-121 and Asn-143 are each glycosylated (N-linked (GlcNAc...) (complex) asparagine). Positions Ile-364 to Asp-618 constitute a Peptidase S1 domain. The active-site Charge relay system is His-406. Residue Asn-416 is glycosylated (N-linked (GlcNAc...) (complex) asparagine). The active-site Charge relay system is Asp-462. The segment at Ala-551–Val-573 is high affinity receptor-binding region which is also known as the TP508 peptide. Ser-568 functions as the Charge relay system in the catalytic mechanism.

This sequence belongs to the peptidase S1 family. As to quaternary structure, heterodimer (named alpha-thrombin) of a light and a heavy chain; disulfide-linked. Forms a heterodimer with SERPINA5. In plasma, interacts (via N-terminus) with alpha-1-microglobulin with molar ratio 1:2 and 1:1; this interaction does not prevent the activation of prothrombin to thrombin. Interacts (thrombin) with iripin-8, a serine protease inhibitor from Ixodes ricinus saliva. Interacts (thrombin) with iripin-3, a serine protease inhibitor from Ixodes ricinus saliva. Interacts (thrombin) with Anopheles albimanus salivary thrombin inhibitor anophelin; the interaction results in thrombin inhibition. Interacts (thrombin) with Anopheles gambiae salivary thrombin inhibitor anophelin; the interaction results in thrombin inhibition. Interacts (thrombin) with Amblyomma variegatum variegin; the interaction results in thrombin inhibition. Interacts (thrombin) with Xenopsylla cheopis salivary thrombin inhibitor XC-42. Interacts (thrombin) with Xenopsylla cheopis salivary thrombin inhibitor XC-43. The gamma-carboxyglutamyl residues, which bind calcium ions, result from the carboxylation of glutamyl residues by a microsomal enzyme, the vitamin K-dependent carboxylase. The modified residues are necessary for the calcium-dependent interaction with a negatively charged phospholipid surface, which is essential for the conversion of prothrombin to thrombin. Post-translationally, N-glycosylated. N-glycan heterogeneity at Asn-121: Hex3HexNAc3 (minor), Hex4HexNAc3 (minor) and Hex5HexNAc4 (major). At Asn-143: Hex4HexNAc3 (minor) and Hex5HexNAc4 (major). In terms of processing, in the penultimate step of the coagulation cascade, prothrombin is converted to thrombin by the prothrombinase complex composed of factor Xa (F10), cofactor Va (F5), and phospholipids. This activation requires factor Xa-catalyzed sequential cleavage at 2 sites, Arg-314 and Arg-363, along 2 possible pathways. In the first pathway, the first cleavage occurs at Arg-314, leading to the formation of the inactive intermediate prethrombin-2. This pathway preferentially occurs on platelets and in the absence of cofactor Va. In the second pathway, the first cleavage occurs at Arg-363, which separates protease domain into 2 chains that remain connected through a disulfide bond and generates the active intermediate meizothrombin. The presence of cofactor Va directs activation along the meizothrombin pathway and greatly accelerates the rate of cleavage at Arg-363, but has a smaller effect on the cleavage of meizothrombin at Arg-314. Meizothrombin accumulates as an intermediate when prothrombinase is assembled on the membrane of red blood cells. As to expression, expressed by the liver and secreted in plasma.

It localises to the secreted. Its subcellular location is the extracellular space. The enzyme catalyses Selective cleavage of Arg-|-Gly bonds in fibrinogen to form fibrin and release fibrinopeptides A and B.. Its activity is regulated as follows. Activity is promoted in the presence of negatively charged surfaces, such as polyphosphate and dextran sulfate. Inhibited by SERPINA5. Its function is as follows. Thrombin, which cleaves bonds after Arg and Lys, converts fibrinogen to fibrin and activates factors V, VII, VIII, XIII, and, in complex with thrombomodulin, protein C. Functions in blood homeostasis, inflammation and wound healing. Activates coagulation factor XI (F11); activation is promoted by the contact with negatively charged surfaces. Triggers the production of pro-inflammatory cytokines, such as MCP-1/CCL2 and IL8/CXCL8, in endothelial cells. The polypeptide is Prothrombin (F2) (Homo sapiens (Human)).